A 219-amino-acid polypeptide reads, in one-letter code: Ribose-5-phosphate isomerase A (219 aa).

Residues 28–31, 81–84, and 94–97 contribute to the substrate site; these read SGST, DGAD, and KGGG. E103 serves as the catalytic Proton acceptor. K121 provides a ligand contact to substrate.

This sequence belongs to the ribose 5-phosphate isomerase family. Homodimer.

It carries out the reaction aldehydo-D-ribose 5-phosphate = D-ribulose 5-phosphate. It participates in carbohydrate degradation; pentose phosphate pathway; D-ribose 5-phosphate from D-ribulose 5-phosphate (non-oxidative stage): step 1/1. In terms of biological role, catalyzes the reversible conversion of ribose-5-phosphate to ribulose 5-phosphate. This is Ribose-5-phosphate isomerase A from Haemophilus influenzae (strain PittGG).